A 296-amino-acid chain; its full sequence is Pre-mRNA-splicing factor CWC23 (296 aa).

Positions 14–86 (DLYKLLELNY…AKKAEYDQWV (73 aa)) constitute a J domain.

Belongs to the DnaJ family. Associated with the spliceosome.

The protein resides in the cytoplasm. Its subcellular location is the nucleus. Functionally, involved in pre-mRNA splicing. May be involved in endoplasmic reticulum-associated protein degradation (ERAD) and required for growth at low and high temperatures. This is Pre-mRNA-splicing factor CWC23 (CWC23) from Candida glabrata (strain ATCC 2001 / BCRC 20586 / JCM 3761 / NBRC 0622 / NRRL Y-65 / CBS 138) (Yeast).